A 94-amino-acid chain; its full sequence is MMGWNTVERNWKELKGKLKETWGDMTDDELDVIAGKREQLVGKIQTKYEIAREEAERQVNAFAHDCDAAKEPLKNVGEAVSSRQKSVKKRSLYT.

The segment at K74–T94 is disordered. The segment covering K85 to T94 has biased composition (basic residues).

It belongs to the UPF0337 (CsbD) family.

The polypeptide is UPF0337 protein NE2439 (Nitrosomonas europaea (strain ATCC 19718 / CIP 103999 / KCTC 2705 / NBRC 14298)).